The primary structure comprises 195 residues: SAGA-associated factor 11 homolog (195 aa).

Residues 1–22 (MSAANMPTTTGAQGSGNQVPRT) form a disordered region. The segment at 105–126 (CTCPNCDRLVAAARFAPHLEKC) adopts an SGF11-type zinc-finger fold. A disordered region spans residues 140–195 (RLATKEGATSAHLHSSGNTGGTDDEDDVDWSSDKRRKKSNQNSRNNGSKKNNGKTF). Serine 171 carries the post-translational modification Phosphoserine. Over residues 179–195 (NQNSRNNGSKKNNGKTF) the composition is skewed to low complexity.

Belongs to the SGF11 family. Component of some SAGA transcription coactivator-HAT complexes, at least composed of Ada2b, not/nonstop, Pcaf/Gcn5, Sgf11 and Spt3. Within the SAGA complex, Sgf11, e(y)2, and not/nonstop form an additional subcomplex of SAGA called the DUB module (deubiquitination module). Interacts directly with not/nonstop. Interacts with the AMEX complex component xmas-2. Interacts with Cbp80; important for promoter recruitment of Sgf11 that is not associated with the DUB module.

The protein localises to the nucleus. It is found in the nucleoplasm. Its subcellular location is the cytoplasm. Functionally, component of the transcription regulatory histone acetylation (HAT) complex SAGA, a multiprotein complex that activates transcription by remodeling chromatin and mediating histone acetylation and deubiquitination. Within the SAGA complex, participates in a subcomplex that specifically deubiquitinates histone H2B. The SAGA complex is recruited to specific gene promoters by activators, where it is required for transcription. Required for nuclear receptor-mediated transactivation. Binds independently on SAGA to promoters in an RNA-dependent manner. Binds to mRNA and is essential for total mRNA export from the nucleus. Required to counteract heterochromatin silencing. Controls the development of neuronal connectivity in visual system by being required for accurate axon targeting in the optic lobe. Required for expression of ecdysone-induced genes such as br/broad. This is SAGA-associated factor 11 homolog from Drosophila sechellia (Fruit fly).